The primary structure comprises 543 residues: Periplasmic oligopeptide-binding protein OppA (543 aa).

Positions 1–26 (MSNITKKSLIAAGILTALIAASAATA) are cleaved as a signal peptide. Cys-297 and Cys-443 are oxidised to a cystine.

This sequence belongs to the bacterial solute-binding protein 5 family. The complex is composed of two ATP-binding proteins (OppD and OppF), two transmembrane proteins (OppB and OppC) and a solute-binding protein (OppA).

Its subcellular location is the periplasm. Its function is as follows. Part of the ABC transporter complex OppABCDF involved in the uptake of oligopeptides, including the cell wall murein tripeptide L-alanyl-gamma-D-glutamyl-meso-diaminopimelate. Plays an important nutritional role and is involved in the recycling of cell wall peptides. Binds peptides containing from two to five amino acid residues regardless of their sequence. Also binds cell wall peptides, such as L-alanyl-gamma-D-glutamyl-meso-diaminopimelate. The protein is Periplasmic oligopeptide-binding protein OppA of Salmonella typhimurium (strain LT2 / SGSC1412 / ATCC 700720).